The sequence spans 352 residues: 4-hydroxy-3-methylbut-2-enyl diphosphate reductase (352 aa).

A [4Fe-4S] cluster-binding site is contributed by Cys-36. Residues His-76 and His-114 each coordinate (2E)-4-hydroxy-3-methylbut-2-enyl diphosphate. Dimethylallyl diphosphate is bound by residues His-76 and His-114. Residues His-76 and His-114 each contribute to the isopentenyl diphosphate site. Position 136 (Cys-136) interacts with [4Fe-4S] cluster. Position 164 (His-164) interacts with (2E)-4-hydroxy-3-methylbut-2-enyl diphosphate. His-164 is a binding site for dimethylallyl diphosphate. Residue His-164 coordinates isopentenyl diphosphate. The Proton donor role is filled by Glu-166. Thr-204 is a (2E)-4-hydroxy-3-methylbut-2-enyl diphosphate binding site. Cys-234 serves as a coordination point for [4Fe-4S] cluster. Positions 262, 263, 264, and 309 each coordinate (2E)-4-hydroxy-3-methylbut-2-enyl diphosphate. Dimethylallyl diphosphate is bound by residues Ser-262, Ser-263, Asn-264, and Ser-309. Residues Ser-262, Ser-263, Asn-264, and Ser-309 each contribute to the isopentenyl diphosphate site.

The protein belongs to the IspH family. [4Fe-4S] cluster serves as cofactor.

It carries out the reaction isopentenyl diphosphate + 2 oxidized [2Fe-2S]-[ferredoxin] + H2O = (2E)-4-hydroxy-3-methylbut-2-enyl diphosphate + 2 reduced [2Fe-2S]-[ferredoxin] + 2 H(+). It catalyses the reaction dimethylallyl diphosphate + 2 oxidized [2Fe-2S]-[ferredoxin] + H2O = (2E)-4-hydroxy-3-methylbut-2-enyl diphosphate + 2 reduced [2Fe-2S]-[ferredoxin] + 2 H(+). It participates in isoprenoid biosynthesis; dimethylallyl diphosphate biosynthesis; dimethylallyl diphosphate from (2E)-4-hydroxy-3-methylbutenyl diphosphate: step 1/1. Its pathway is isoprenoid biosynthesis; isopentenyl diphosphate biosynthesis via DXP pathway; isopentenyl diphosphate from 1-deoxy-D-xylulose 5-phosphate: step 6/6. Its function is as follows. Catalyzes the conversion of 1-hydroxy-2-methyl-2-(E)-butenyl 4-diphosphate (HMBPP) into a mixture of isopentenyl diphosphate (IPP) and dimethylallyl diphosphate (DMAPP). Acts in the terminal step of the DOXP/MEP pathway for isoprenoid precursor biosynthesis. The protein is 4-hydroxy-3-methylbut-2-enyl diphosphate reductase of Bifidobacterium longum (strain NCC 2705).